The following is a 237-amino-acid chain: Cysteine-rich venom protein DIS2 (237 aa).

The first 18 residues, 1 to 18 (MFVFILLSLAAVLQQSFG), serve as a signal peptide directing secretion. The 129-residue stretch at 37–165 (VDKHNAFRRS…SYNYFYVCQY (129 aa)) folds into the SCP domain. Intrachain disulfides connect Cys-74–Cys-152, Cys-91–Cys-166, Cys-147–Cys-163, Cys-185–Cys-192, Cys-188–Cys-197, Cys-201–Cys-234, and Cys-219–Cys-232. The ShKT domain occupies 201-234 (CSREDVFMNCKSLVAQSNCQDDYIRKNCPATCFC).

This sequence belongs to the CRISP family. As to expression, expressed by the venom gland.

The protein localises to the secreted. Its function is as follows. Weakly blocks contraction of smooth muscle elicited by high potassium-induced depolarization, but does not block caffeine-stimulated contraction. May target voltage-gated calcium channels on smooth muscle. The protein is Cysteine-rich venom protein DIS2 of Dispholidus typus (Boomslang).